The primary structure comprises 390 residues: Succinate--CoA ligase [ADP-forming] subunit beta (390 aa).

The region spanning 9 to 244 (KEILKRYGVN…ETQTDTSENE (236 aa)) is the ATP-grasp domain. ATP-binding positions include K46, 53–55 (GRG), E99, L102, and E107. Mg(2+)-binding residues include N199 and D213. Residues N264 and 321–323 (GIV) each bind substrate.

The protein belongs to the succinate/malate CoA ligase beta subunit family. In terms of assembly, heterotetramer of two alpha and two beta subunits. Requires Mg(2+) as cofactor.

The enzyme catalyses succinate + ATP + CoA = succinyl-CoA + ADP + phosphate. The catalysed reaction is GTP + succinate + CoA = succinyl-CoA + GDP + phosphate. It functions in the pathway carbohydrate metabolism; tricarboxylic acid cycle; succinate from succinyl-CoA (ligase route): step 1/1. Its function is as follows. Succinyl-CoA synthetase functions in the citric acid cycle (TCA), coupling the hydrolysis of succinyl-CoA to the synthesis of either ATP or GTP and thus represents the only step of substrate-level phosphorylation in the TCA. The beta subunit provides nucleotide specificity of the enzyme and binds the substrate succinate, while the binding sites for coenzyme A and phosphate are found in the alpha subunit. This chain is Succinate--CoA ligase [ADP-forming] subunit beta, found in Campylobacter curvus (strain 525.92).